Here is a 364-residue protein sequence, read N- to C-terminus: Mitogen-activated protein kinase 11 (364 aa).

The Protein kinase domain occupies L24–F308. ATP-binding positions include V30–V38 and K53. Position 71 (E71) interacts with nilotinib. The active-site Proton acceptor is D150. T180 carries the post-translational modification Phosphothreonine; by MAP2K3, MAP2K4 and MAP2K6. Positions T180 to Y182 match the TXY motif. A Phosphotyrosine; by MAP2K3, MAP2K4 and MAP2K6 modification is found at Y182. 2 disordered regions span residues Y311 to E331 and Q343 to Q364. The span at P314–S326 shows a compositional bias: acidic residues. Residue Y323 is modified to Phosphotyrosine; by ZAP70.

Belongs to the protein kinase superfamily. CMGC Ser/Thr protein kinase family. MAP kinase subfamily. As to quaternary structure, interacts with HDAC3 and DUSP16. Mg(2+) serves as cofactor. Dually phosphorylated on Thr-180 and Tyr-182 by MAP2K3/MKK3, MAP2K4/MKK4 and MAP2K6/MKK6, which activates the enzyme. In terms of tissue distribution, highest levels in the brain and heart. Also expressed in the placenta, lung, liver, skeletal muscle, kidney and pancreas.

The protein localises to the cytoplasm. Its subcellular location is the nucleus. The enzyme catalyses L-seryl-[protein] + ATP = O-phospho-L-seryl-[protein] + ADP + H(+). The catalysed reaction is L-threonyl-[protein] + ATP = O-phospho-L-threonyl-[protein] + ADP + H(+). With respect to regulation, activated by phosphorylation on threonine and tyrosine by MAP2K3/MKK3, MAP2K4/MKK4 and MAP2K6/MKK6. MAP2K3/MKK3 and MAP2K6/MKK6 are both essential for the activation of MAPK11 induced by environmental stress. HDAC3 interacts directly and selectively with MAPK11 to repress ATF2 transcriptional activity, and regulate TNF gene expression in LPS-stimulated cells. Inhibited by SB203580 and pyridinyl-imidazole related compounds. Its function is as follows. Serine/threonine kinase which acts as an essential component of the MAP kinase signal transduction pathway. MAPK11 is one of the four p38 MAPKs which play an important role in the cascades of cellular responses evoked by extracellular stimuli such as pro-inflammatory cytokines or physical stress leading to direct activation of transcription factors. Accordingly, p38 MAPKs phosphorylate a broad range of proteins and it has been estimated that they may have approximately 200 to 300 substrates each. MAPK11 functions are mostly redundant with those of MAPK14. Some of the targets are downstream kinases which are activated through phosphorylation and further phosphorylate additional targets. RPS6KA5/MSK1 and RPS6KA4/MSK2 can directly phosphorylate and activate transcription factors such as CREB1, ATF1, the NF-kappa-B isoform RELA/NFKB3, STAT1 and STAT3, but can also phosphorylate histone H3 and the nucleosomal protein HMGN1. RPS6KA5/MSK1 and RPS6KA4/MSK2 play important roles in the rapid induction of immediate-early genes in response to stress or mitogenic stimuli, either by inducing chromatin remodeling or by recruiting the transcription machinery. On the other hand, two other kinase targets, MAPKAPK2/MK2 and MAPKAPK3/MK3, participate in the control of gene expression mostly at the post-transcriptional level, by phosphorylating ZFP36 (tristetraprolin) and ELAVL1, and by regulating EEF2K, which is important for the elongation of mRNA during translation. MKNK1/MNK1 and MKNK2/MNK2, two other kinases activated by p38 MAPKs, regulate protein synthesis by phosphorylating the initiation factor EIF4E2. In the cytoplasm, the p38 MAPK pathway is an important regulator of protein turnover. For example, CFLAR is an inhibitor of TNF-induced apoptosis whose proteasome-mediated degradation is regulated by p38 MAPK phosphorylation. Ectodomain shedding of transmembrane proteins is regulated by p38 MAPKs as well. In response to inflammatory stimuli, p38 MAPKs phosphorylate the membrane-associated metalloprotease ADAM17. Such phosphorylation is required for ADAM17-mediated ectodomain shedding of TGF-alpha family ligands, which results in the activation of EGFR signaling and cell proliferation. Additional examples of p38 MAPK substrates are the FGFR1. FGFR1 can be translocated from the extracellular space into the cytosol and nucleus of target cells, and regulates processes such as rRNA synthesis and cell growth. FGFR1 translocation requires p38 MAPK activation. In the nucleus, many transcription factors are phosphorylated and activated by p38 MAPKs in response to different stimuli. Classical examples include ATF1, ATF2, ATF6, ELK1, PTPRH, DDIT3, TP53/p53 and MEF2C and MEF2A. The p38 MAPKs are emerging as important modulators of gene expression by regulating chromatin modifiers and remodelers. The promoters of several genes involved in the inflammatory response, such as IL6, IL8 and IL12B, display a p38 MAPK-dependent enrichment of histone H3 phosphorylation on 'Ser-10' (H3S10ph) in LPS-stimulated myeloid cells. This phosphorylation enhances the accessibility of the cryptic NF-kappa-B-binding sites marking promoters for increased NF-kappa-B recruitment. Phosphorylates NLRP1 downstream of MAP3K20/ZAK in response to UV-B irradiation and ribosome collisions, promoting activation of the NLRP1 inflammasome and pyroptosis. Phosphorylates methyltransferase DOT1L on 'Ser-834', 'Thr-900', 'Ser-902', 'Thr-984', 'Ser-1001', 'Ser-1009' and 'Ser-1104'. In Homo sapiens (Human), this protein is Mitogen-activated protein kinase 11 (MAPK11).